Reading from the N-terminus, the 253-residue chain is 5-oxoprolinase subunit A (253 aa).

The protein belongs to the LamB/PxpA family. Forms a complex composed of PxpA, PxpB and PxpC.

The enzyme catalyses 5-oxo-L-proline + ATP + 2 H2O = L-glutamate + ADP + phosphate + H(+). Its function is as follows. Catalyzes the cleavage of 5-oxoproline to form L-glutamate coupled to the hydrolysis of ATP to ADP and inorganic phosphate. In Bacillus cereus (strain ATCC 10987 / NRS 248), this protein is 5-oxoprolinase subunit A.